The primary structure comprises 387 residues: S-adenosylmethionine synthase (387 aa).

His-16 serves as a coordination point for ATP. Mg(2+) is bound at residue Asp-18. Residue Glu-44 participates in K(+) binding. The L-methionine site is built by Glu-57 and Gln-100. The tract at residues 100–110 (QSPDIAQGVDE) is flexible loop. ATP is bound by residues 167-169 (DAK), 232-233 (RF), Asp-241, 247-248 (RK), Ala-264, and Lys-268. L-methionine is bound at residue Asp-241. Lys-272 serves as a coordination point for L-methionine.

This sequence belongs to the AdoMet synthase family. As to quaternary structure, homotetramer; dimer of dimers. The cofactor is Mg(2+). K(+) is required as a cofactor.

Its subcellular location is the cytoplasm. It carries out the reaction L-methionine + ATP + H2O = S-adenosyl-L-methionine + phosphate + diphosphate. The protein operates within amino-acid biosynthesis; S-adenosyl-L-methionine biosynthesis; S-adenosyl-L-methionine from L-methionine: step 1/1. Catalyzes the formation of S-adenosylmethionine (AdoMet) from methionine and ATP. The overall synthetic reaction is composed of two sequential steps, AdoMet formation and the subsequent tripolyphosphate hydrolysis which occurs prior to release of AdoMet from the enzyme. In Janthinobacterium sp. (strain Marseille) (Minibacterium massiliensis), this protein is S-adenosylmethionine synthase.